The chain runs to 297 residues: Phosphatidylglycerol--prolipoprotein diacylglyceryl transferase (297 aa).

A run of 4 helical transmembrane segments spans residues 20–40 (FLTI…GLFI), 58–78 (ILPS…VIFE), 104–124 (IAIW…FLCI), and 133–153 (IHLK…QSIG). Residue arginine 154 coordinates a 1,2-diacyl-sn-glycero-3-phospho-(1'-sn-glycerol). Transmembrane regions (helical) follow at residues 194–214 (TFIY…TIFY), 225–245 (GFIS…IEGL), and 266–286 (AQFI…FLRL).

It belongs to the Lgt family.

It localises to the cell inner membrane. It carries out the reaction L-cysteinyl-[prolipoprotein] + a 1,2-diacyl-sn-glycero-3-phospho-(1'-sn-glycerol) = an S-1,2-diacyl-sn-glyceryl-L-cysteinyl-[prolipoprotein] + sn-glycerol 1-phosphate + H(+). Its pathway is protein modification; lipoprotein biosynthesis (diacylglyceryl transfer). Catalyzes the transfer of the diacylglyceryl group from phosphatidylglycerol to the sulfhydryl group of the N-terminal cysteine of a prolipoprotein, the first step in the formation of mature lipoproteins. The protein is Phosphatidylglycerol--prolipoprotein diacylglyceryl transferase of Prochlorococcus marinus subsp. pastoris (strain CCMP1986 / NIES-2087 / MED4).